Reading from the N-terminus, the 422-residue chain is MTVFFKTLRNHWKKTTAGLCLLTWGGHWLYGKHCDNLLRRAACQEAQVFGNQLIPPNAQVKKATVFLNPAACKGKARTLFEKNAAPILHLSGMDVTIVKTDYEGQAKKLLELMENTDVIIVAGGDGTLQEVVTGVLRRTDEATFSKIPIGFIPLGETSSLSHTLFAESGNKVQHITDATLAIVKGETVPLDVLQIKGEKEQPVFAMTGLRWGSFRDAGVKVSKYWYLGPLKIKAAHFFSTLKEWPQTHQASISYTGPTERPPNEPEETPVQRPSLYRRILRRLASYWAQPQDALSQEVSPEVWKDVQLSTIELSITTRNNQLDPTSKEDFLNICIEPDTISKGDFITIGSRKVRNPKLHVEGTECLQASQCTLLIPEGAGGSFSIDSEEYEAMPVEVKLLPRKLQFFCDPRKREQMLTSPTQ.

Lys6 carries the N6-acetyllysine modification. Residues 15-31 are hydrophobic; sequence TTAGLCLLTWGGHWLYG. Residues 58 to 199 enclose the DAGKc domain; that stretch reads AQVKKATVFL…LDVLQIKGEK (142 aa). The interval 249–271 is disordered; sequence QASISYTGPTERPPNEPEETPVQ.

This sequence belongs to the AGK family. As to quaternary structure, component of the TIM22 complex, which core is composed of TIMM22, associated with TIMM10 (TIMM10A and/or TIMM10B), TIMM9, AGK and TIMM29. Interacts with SMIM26. The cofactor is Mg(2+). In terms of tissue distribution, highly expressed in muscle, heart, kidney and brain.

It localises to the mitochondrion inner membrane. It is found in the mitochondrion intermembrane space. The enzyme catalyses a monoacylglycerol + ATP = a monoacyl-sn-glycero-3-phosphate + ADP + H(+). The catalysed reaction is a 1,2-diacyl-sn-glycerol + ATP = a 1,2-diacyl-sn-glycero-3-phosphate + ADP + H(+). It carries out the reaction an N-acylsphing-4-enine + ATP = an N-acylsphing-4-enine 1-phosphate + ADP + H(+). It catalyses the reaction 1-(9Z-octadecenoyl)-sn-glycerol + ATP = 1-(9Z-octadecenoyl)-sn-glycero-3-phosphate + ADP + H(+). The enzyme catalyses 1,2-di-(9Z-octadecenoyl)-sn-glycerol + ATP = 1,2-di-(9Z-octadecenoyl)-sn-glycero-3-phosphate + ADP + H(+). The catalysed reaction is a 1-acyl-sn-glycerol + ATP = a 1-acyl-sn-glycero-3-phosphate + ADP + H(+). It carries out the reaction 1-hexadecanoyl-sn-glycerol + ATP = 1-hexadecanoyl-sn-glycero-3-phosphate + ADP + H(+). It catalyses the reaction a 2-acylglycerol + ATP = a 2-acyl-sn-glycerol 3-phosphate + ADP + H(+). The enzyme catalyses 2-(5Z,8Z,11Z,14Z-eicosatetraenoyl)-glycerol + ATP = 2-(5Z,8Z,11Z,14Z-eicosatetraenoyl)-sn-glycero-3-phosphate + ADP + H(+). The catalysed reaction is 1-(5Z,8Z,11Z,14Z-eicosatetraenoyl)-sn-glycerol + ATP = 1-(5Z,8Z,11Z,14Z-eicosatetraenoyl)-sn-glycero-3-phosphate + ADP + H(+). It carries out the reaction N-(hexanoyl)sphing-4-enine + ATP = N-hexanoylsphing-4-enine 1-phosphate + ADP + H(+). Its pathway is lipid metabolism; glycerolipid metabolism. Functionally, lipid kinase that can phosphorylate both monoacylglycerol and diacylglycerol to form lysophosphatidic acid (LPA) and phosphatidic acid (PA), respectively. Does not phosphorylate sphingosine. Phosphorylates ceramide. Phosphorylates 1,2-dioleoylglycerol more rapidly than 2,3-dioleoylglycerol. Independently of its lipid kinase activity, acts as a component of the TIM22 complex. The TIM22 complex mediates the import and insertion of multi-pass transmembrane proteins into the mitochondrial inner membrane by forming a twin-pore translocase that uses the membrane potential as the external driving force. In the TIM22 complex, required for the import of a subset of metabolite carriers into mitochondria, such as ANT1/SLC25A4 and SLC25A24, while it is not required for the import of TIMM23. Overexpression increases the formation and secretion of LPA, resulting in transactivation of EGFR and activation of the downstream MAPK signaling pathway, leading to increased cell growth. The protein is Acylglycerol kinase, mitochondrial of Homo sapiens (Human).